Here is a 243-residue protein sequence, read N- to C-terminus: Adenylate kinase 4 (243 aa).

40 to 45 (GSGKGT) provides a ligand contact to ATP. The NMP stretch occupies residues 60-89 (ATGDMLRAAVAAKTPLGVKAKEAMDKGELV). Residues threonine 61, arginine 66, 87 to 89 (ELV), 115 to 118 (GFPR), and glutamine 122 contribute to the AMP site. Positions 156-193 (GRWIHPSSGRSYHTKFAPPKVPGVDDVTGEPLIQRKDD) are LID. Residue arginine 157 coordinates ATP. Positions 190 and 201 each coordinate AMP.

The protein belongs to the adenylate kinase family.

The protein localises to the cytoplasm. It carries out the reaction AMP + ATP = 2 ADP. In terms of biological role, catalyzes the reversible transfer of the terminal phosphate group between ATP and AMP. Plays an important role in cellular energy homeostasis and in adenine nucleotide metabolism. This is Adenylate kinase 4 (ADK-B) from Oryza sativa subsp. japonica (Rice).